A 285-amino-acid polypeptide reads, in one-letter code: Probable endonuclease 4 (285 aa).

Residues His69, His109, Glu145, Asp179, His182, His216, Asp229, His231, and Glu261 each coordinate Zn(2+).

Belongs to the AP endonuclease 2 family. It depends on Zn(2+) as a cofactor.

The catalysed reaction is Endonucleolytic cleavage to 5'-phosphooligonucleotide end-products.. Functionally, endonuclease IV plays a role in DNA repair. It cleaves phosphodiester bonds at apurinic or apyrimidinic (AP) sites, generating a 3'-hydroxyl group and a 5'-terminal sugar phosphate. The polypeptide is Probable endonuclease 4 (Salmonella schwarzengrund (strain CVM19633)).